We begin with the raw amino-acid sequence, 319 residues long: HTH-type transcriptional regulator YidZ (319 aa).

Residues 8–65 (LDLNLLLCLQLLMQERSVTKAAKRMNVTPSAVSKSLSKLRTWFDDPLFVNTPLGLTPT) form the HTH lysR-type domain. Positions 25-44 (VTKAAKRMNVTPSAVSKSLS) form a DNA-binding region, H-T-H motif.

Belongs to the LysR transcriptional regulatory family.

In terms of biological role, involved in anaerobic NO protection. The sequence is that of HTH-type transcriptional regulator YidZ from Citrobacter koseri (strain ATCC BAA-895 / CDC 4225-83 / SGSC4696).